A 416-amino-acid chain; its full sequence is Glutamyl-tRNA reductase (416 aa).

Substrate contacts are provided by residues Thr49–Arg52, Ser105, Glu110–Gln112, and Gln116. Cys50 serves as the catalytic Nucleophile. An NADP(+)-binding site is contributed by Gly185–Ile190.

It belongs to the glutamyl-tRNA reductase family. In terms of assembly, homodimer.

The enzyme catalyses (S)-4-amino-5-oxopentanoate + tRNA(Glu) + NADP(+) = L-glutamyl-tRNA(Glu) + NADPH + H(+). It participates in porphyrin-containing compound metabolism; protoporphyrin-IX biosynthesis; 5-aminolevulinate from L-glutamyl-tRNA(Glu): step 1/2. Catalyzes the NADPH-dependent reduction of glutamyl-tRNA(Glu) to glutamate 1-semialdehyde (GSA). This Shewanella denitrificans (strain OS217 / ATCC BAA-1090 / DSM 15013) protein is Glutamyl-tRNA reductase.